A 740-amino-acid polypeptide reads, in one-letter code: Ion-translocating oxidoreductase complex subunit C (740 aa).

4Fe-4S ferredoxin-type domains follow at residues Gly369–Tyr397 and Lys407–Phe436. [4Fe-4S] cluster-binding residues include Cys377, Cys380, Cys383, Cys387, Cys416, Cys419, Cys422, and Cys426. 2 disordered regions span residues Leu571–Ala590 and Lys602–Lys716. Low complexity-rich tracts occupy residues Gln573 to Gln583 and Gln637 to Gln647.

This sequence belongs to the 4Fe4S bacterial-type ferredoxin family. RnfC subfamily. In terms of assembly, the complex is composed of six subunits: RsxA, RsxB, RsxC, RsxD, RsxE and RsxG. [4Fe-4S] cluster serves as cofactor.

The protein resides in the cell inner membrane. Its function is as follows. Part of a membrane-bound complex that couples electron transfer with translocation of ions across the membrane. Required to maintain the reduced state of SoxR. Probably transfers electron from NAD(P)H to SoxR. This is Ion-translocating oxidoreductase complex subunit C from Escherichia coli (strain K12).